Consider the following 600-residue polypeptide: NADH-quinone oxidoreductase subunit C/D (600 aa).

Positions 1 to 190 (MIDLMPKKNT…EPFFLNEQKE (190 aa)) are NADH dehydrogenase I subunit C. The tract at residues 214 to 600 (EFMFLNLGPN…IDFVMSDVDR (387 aa)) is NADH dehydrogenase I subunit D.

In the N-terminal section; belongs to the complex I 30 kDa subunit family. The protein in the C-terminal section; belongs to the complex I 49 kDa subunit family. In terms of assembly, NDH-1 is composed of 13 different subunits. Subunits NuoB, CD, E, F, and G constitute the peripheral sector of the complex.

The protein resides in the cell inner membrane. The enzyme catalyses a quinone + NADH + 5 H(+)(in) = a quinol + NAD(+) + 4 H(+)(out). NDH-1 shuttles electrons from NADH, via FMN and iron-sulfur (Fe-S) centers, to quinones in the respiratory chain. The immediate electron acceptor for the enzyme in this species is believed to be ubiquinone. Couples the redox reaction to proton translocation (for every two electrons transferred, four hydrogen ions are translocated across the cytoplasmic membrane), and thus conserves the redox energy in a proton gradient. The chain is NADH-quinone oxidoreductase subunit C/D from Buchnera aphidicola subsp. Acyrthosiphon pisum (strain APS) (Acyrthosiphon pisum symbiotic bacterium).